Here is a 570-residue protein sequence, read N- to C-terminus: Ferroportin (570 aa).

The Cytoplasmic portion of the chain corresponds to 1-23; it reads MTKARDQTHQEGCCGSLANYLTS. The chain crosses the membrane as a helical span at residues 24 to 53; the sequence is AKFLLYLGHSLSTWGDRMWHFAVSVFLVEL. The Fe cation site is built by D39 and H43. Residues 54–57 are Extracellular-facing; it reads YGNS. A helical transmembrane segment spans residues 58-84; sequence LLLTAVYGLVVAGSVLVLGAIIGDWVD. Topologically, residues 85–87 are cytoplasmic; sequence KNA. The helical transmembrane segment at 88 to 118 threads the bilayer; it reads RLKVAQTSLVVQNVSVILCGIILMMVFLHKN. The Extracellular segment spans residues 119-126; it reads ELLTMYHG. A helical membrane pass occupies residues 127 to 162; it reads WVLTVCYILIITIANIANLASTATAITIQRDWIVVV. Residues 163–164 lie on the Cytoplasmic side of the membrane; the sequence is AG. Residues 165–195 form a helical membrane-spanning segment; that stretch reads ENRSRLADMNATIRRIDQLTNILAPMAVGQI. The Extracellular portion of the chain corresponds to 196–202; that stretch reads MTFGSPV. A helical transmembrane segment spans residues 203 to 229; sequence IGCGFISGWNLVSMCVEYFLLWKVYQK. The Cytoplasmic portion of the chain corresponds to 230 to 306; that stretch reads TPALAVKAAL…DGWVSYYNQP (77 aa). The helical transmembrane segment at 307–333 threads the bilayer; that stretch reads VFLAGMGLAFLYMTVLGFDCITTGYAY. C326 lines the Fe cation pocket. Over 334–338 the chain is Extracellular; that stretch reads TQGLS. The chain crosses the membrane as a helical span at residues 339–366; it reads GSILSILMGASAITGIMGTVAFTWLRRK. Over 367-368 the chain is Cytoplasmic; that stretch reads CG. Residues 369–391 form a helical membrane-spanning segment; it reads LVRTGLFSGLAQLSCLILCVISV. Topologically, residues 392-452 are extracellular; the sequence is FMPGSPLDLS…EMSTKPIPIV (61 aa). Residue N437 is glycosylated (N-linked (GlcNAc...) asparagine). Residues 453–482 traverse the membrane as a helical segment; it reads SVSLLFAGVIAARIGLWSFDLTVTQLLQEN. The Cytoplasmic portion of the chain corresponds to 483–487; the sequence is VIESE. A helical transmembrane segment spans residues 488–512; the sequence is RGIINGVQNSMNYLLDLLHFIMVIL. Fe cation is bound at residue H506. The Extracellular segment spans residues 513 to 515; the sequence is APN. Residues 516 to 541 form a helical membrane-spanning segment; the sequence is PEAFGLLVLISVSFVAMGHLMYFRFA. The Cytoplasmic portion of the chain corresponds to 542-570; that stretch reads QKTLGNQIFVCGPDEKEVTDENQPNTSVV.

This sequence belongs to the ferroportin (FP) (TC 2.A.100) family. SLC40A subfamily. Identified in a complex with STOM. Interacts with HAMP; affinity of the peptide hormone HAMP for SLC40A1 increases by 80-fold in the presence of iron and the interaction promotes SLC40A1 ubiquitination and degradation. Part of a complex composed of SLC40A1/ferroportin, TF/transferrin and HEPH/hephaestin that transfers iron from cells to transferrin. In terms of processing, polyubiquitinated by RNF217; leading to proteasomal degradation. Under conditions of high systemic iron levels, both the hormone peptide hepcidin/HAMP and holo(iron bound)-transferrin/TF induce the ubiquitination, internalization and proteasomal degradation of SLC40A1 to control iron release from cells. High expression in spleen, liver, kidney, heart and duodenum.

It is found in the cell membrane. It localises to the basolateral cell membrane. It carries out the reaction Fe(2+)(in) = Fe(2+)(out). Transports Fe(2+) from the inside of a cell to the outside of the cell, playing a key role for maintaining systemic iron homeostasis. Transports iron from intestinal, splenic, hepatic cells, macrophages and erythrocytes into the blood to provide iron to other tissues. Controls therefore dietary iron uptake, iron recycling by macrophages and erythrocytes, and release of iron stores in hepatocytes. When iron is in excess in serum, circulating HAMP/hepcidin levels increase resulting in a degradation of SLC40A1, thus limiting the iron efflux to plasma. This chain is Ferroportin, found in Mus musculus (Mouse).